The following is a 297-amino-acid chain: Homoserine kinase (297 aa).

Residue 82–92 (PVSRGLGSSAA) coordinates ATP.

This sequence belongs to the GHMP kinase family. Homoserine kinase subfamily.

The protein resides in the cytoplasm. It catalyses the reaction L-homoserine + ATP = O-phospho-L-homoserine + ADP + H(+). It functions in the pathway amino-acid biosynthesis; L-threonine biosynthesis; L-threonine from L-aspartate: step 4/5. In terms of biological role, catalyzes the ATP-dependent phosphorylation of L-homoserine to L-homoserine phosphate. This chain is Homoserine kinase, found in Clostridium botulinum (strain Okra / Type B1).